Here is a 273-residue protein sequence, read N- to C-terminus: MPELPEVETIRRSLSQHILERRIEEILIRWPGAVEGYEEKTFADAVRGLKFQSIERRGKYLLFTLEEGWSFIAHMRMTGRMVYHAQSQEPEKHTHVVLKLSSGEIHFTDTRKFGRLQLVRTEERLQQPSLARLGPEPLEEGFSAAELGRRLAPRKLAIKAALLDQTLVAGIGNIYADEALFRAGIAPERCANSLTKEEIEKLYPAICQVLEEGIAANGTSFRDYQDANGERGDFQKELKVYGRGGEPCKECGHTLVRIRLAGRSTVFCPCCQV.

The active-site Schiff-base intermediate with DNA is Pro-2. Glu-3 (proton donor) is an active-site residue. Lys-59 functions as the Proton donor; for beta-elimination activity in the catalytic mechanism. DNA-binding residues include His-93, Arg-111, and Arg-154. The FPG-type zinc-finger motif lies at 239–273 (KVYGRGGEPCKECGHTLVRIRLAGRSTVFCPCCQV). Arg-263 (proton donor; for delta-elimination activity) is an active-site residue.

It belongs to the FPG family. Monomer. Requires Zn(2+) as cofactor.

It carries out the reaction Hydrolysis of DNA containing ring-opened 7-methylguanine residues, releasing 2,6-diamino-4-hydroxy-5-(N-methyl)formamidopyrimidine.. The catalysed reaction is 2'-deoxyribonucleotide-(2'-deoxyribose 5'-phosphate)-2'-deoxyribonucleotide-DNA = a 3'-end 2'-deoxyribonucleotide-(2,3-dehydro-2,3-deoxyribose 5'-phosphate)-DNA + a 5'-end 5'-phospho-2'-deoxyribonucleoside-DNA + H(+). Its function is as follows. Involved in base excision repair of DNA damaged by oxidation or by mutagenic agents. Acts as a DNA glycosylase that recognizes and removes damaged bases. Has a preference for oxidized purines, such as 7,8-dihydro-8-oxoguanine (8-oxoG). Has AP (apurinic/apyrimidinic) lyase activity and introduces nicks in the DNA strand. Cleaves the DNA backbone by beta-delta elimination to generate a single-strand break at the site of the removed base with both 3'- and 5'-phosphates. The sequence is that of Formamidopyrimidine-DNA glycosylase from Desulfitobacterium hafniense (strain DSM 10664 / DCB-2).